Reading from the N-terminus, the 21-residue chain is 78 kDa dihydrolipoyllysine-residue acetyltransferase component of pyruvate dehydrogenase complex (21 aa).

This sequence belongs to the 2-oxoacid dehydrogenase family. Forms a 60-polypeptide structural core. It depends on (R)-lipoate as a cofactor.

It is found in the mitochondrion matrix. It carries out the reaction N(6)-[(R)-dihydrolipoyl]-L-lysyl-[protein] + acetyl-CoA = N(6)-[(R)-S(8)-acetyldihydrolipoyl]-L-lysyl-[protein] + CoA. Functionally, the pyruvate dehydrogenase complex catalyzes the overall conversion of pyruvate to acetyl-CoA and CO(2). It contains multiple copies of three enzymatic components: pyruvate dehydrogenase (E1), dihydrolipoamide acetyltransferase (E2) and lipoamide dehydrogenase (E3). The sequence is that of 78 kDa dihydrolipoyllysine-residue acetyltransferase component of pyruvate dehydrogenase complex from Solanum tuberosum (Potato).